A 281-amino-acid polypeptide reads, in one-letter code: 39kDa core protein OPG130 (281 aa).

The span at M1 to Y22 shows a compositional bias: polar residues. 3 disordered regions span residues M1 to K33, I91 to D112, and N149 to P192. Over residues S24 to K33 the composition is skewed to basic and acidic residues. The segment covering P94–D112 has biased composition (polar residues). Residues T154–S175 show a composition bias toward low complexity.

Belongs to the orthopoxvirus OPG130 family. In terms of assembly, interacts with OPG136 and its cleaved form. In terms of processing, its phosphorylation state is regulated by the OPG054 kinase and the OPG106 phosphatase.

The protein resides in the virion. The protein localises to the host endoplasmic reticulum-Golgi intermediate compartment membrane. Functionally, component of the virion core. Participates in virion assembly. In Vaccinia virus (strain Copenhagen) (VACV), this protein is 39kDa core protein OPG130 (OPG130).